Reading from the N-terminus, the 122-residue chain is Large ribosomal subunit protein uL18 (122 aa).

Belongs to the universal ribosomal protein uL18 family. Part of the 50S ribosomal subunit; part of the 5S rRNA/L5/L18/L25 subcomplex. Contacts the 5S and 23S rRNAs.

This is one of the proteins that bind and probably mediate the attachment of the 5S RNA into the large ribosomal subunit, where it forms part of the central protuberance. This Desulfitobacterium hafniense (strain DSM 10664 / DCB-2) protein is Large ribosomal subunit protein uL18.